A 309-amino-acid polypeptide reads, in one-letter code: Aspartate carbamoyltransferase catalytic subunit (309 aa).

Arg55 and Thr56 together coordinate carbamoyl phosphate. Lys85 serves as a coordination point for L-aspartate. Carbamoyl phosphate is bound by residues Arg106, His135, and Gln138. Arg168 and Arg230 together coordinate L-aspartate. Residues Leu268 and Pro269 each contribute to the carbamoyl phosphate site.

Belongs to the aspartate/ornithine carbamoyltransferase superfamily. ATCase family. As to quaternary structure, heterododecamer (2C3:3R2) of six catalytic PyrB chains organized as two trimers (C3), and six regulatory PyrI chains organized as three dimers (R2).

It carries out the reaction carbamoyl phosphate + L-aspartate = N-carbamoyl-L-aspartate + phosphate + H(+). The protein operates within pyrimidine metabolism; UMP biosynthesis via de novo pathway; (S)-dihydroorotate from bicarbonate: step 2/3. In terms of biological role, catalyzes the condensation of carbamoyl phosphate and aspartate to form carbamoyl aspartate and inorganic phosphate, the committed step in the de novo pyrimidine nucleotide biosynthesis pathway. This chain is Aspartate carbamoyltransferase catalytic subunit, found in Photobacterium profundum (strain SS9).